We begin with the raw amino-acid sequence, 604 residues long: MTDVPVSRLRNFCIIAHIDHGKSTLADRLLQDTGTVAGRDMQEQFLDNMDLERERGITIKLQAARMNYTAADGESYVLNLIDTPGHVDFSYEVSRSLQACEGALLVVDASQGVEAQTLANVYLALENDLEIIPVLNKIDLPGSDPERIKEEIEAIIGLDTSTAIACSAKTGLGVPEIMQAVVDRIPPPADTIDKPTKALIFDSYYDSYRGVIVYFRVISGRISTKDKVLLMASKKSYELDEIGVMSPDQCEVNELHAGEVGYLAASIKAVADARVGDTITLLNAPADEPLPGYTEAKPMVFCGLFPTDSDQYPDLREALDKLQLSDAALKYEPETSSAMGFGFRCGFLGLLHMEIVQERLEREYDLDLIVTAPSVIYKVNMIDGQMLMVDNPATLPDPQRRESIEEPYVRMEIYAPNEYNGTLMGLCQERRGEYIDMKYITTERVTLIYELPLAEVVTDFFDQMKSRTKGYASMEYHLIGYRRNDLVRLDVLINAEKADPLTTIAHRDKAYSIGKGLVEKLKELIPRQQFKIPLQASIGSRIIASESISAMRKDVLAKCYGGDISRKKKLLKKQAKGKKRMKAMGKVDVPQEAFMAVLKLNQTS.

The tr-type G domain occupies 7–189 (SRLRNFCIIA…AVVDRIPPPA (183 aa)). Residues 19-24 (DHGKST) and 136-139 (NKID) contribute to the GTP site.

Belongs to the TRAFAC class translation factor GTPase superfamily. Classic translation factor GTPase family. LepA subfamily.

Its subcellular location is the cell inner membrane. It catalyses the reaction GTP + H2O = GDP + phosphate + H(+). Required for accurate and efficient protein synthesis under certain stress conditions. May act as a fidelity factor of the translation reaction, by catalyzing a one-codon backward translocation of tRNAs on improperly translocated ribosomes. Back-translocation proceeds from a post-translocation (POST) complex to a pre-translocation (PRE) complex, thus giving elongation factor G a second chance to translocate the tRNAs correctly. Binds to ribosomes in a GTP-dependent manner. In Prochlorococcus marinus (strain MIT 9313), this protein is Elongation factor 4.